Reading from the N-terminus, the 255-residue chain is MSNNYTSLSSSLDEEMGLKAGHEIDLEGSPPSEHNSEEKSTLPSNSDILTSANPVSQASETPDHSIESNTGSTQSPTSHSLLLKFSFCIVYYFYFAIVVLGCVLPFEHTHTFLIAFLVIFGIISVILFSGSIYYYETWTKTVKHFLKKVISPFKKEYIVCAFLKTFVFYGLLKTIEHFLVLLSGDKWGWKCSTLSSILTPVSCISFCLNESVQLRSCSTHLFINTVAWIKSLGGGKNAFENNYNQLNETSPEDLV.

A disordered region spans residues 19–78 (KAGHEIDLEGSPPSEHNSEEKSTLPSNSDILTSANPVSQASETPDHSIESNTGSTQSPTS). Composition is skewed to polar residues over residues 41 to 60 (TLPS…QASE) and 67 to 78 (ESNTGSTQSPTS). The next 3 helical transmembrane spans lie at 85–105 (FSFC…CVLP), 112–132 (FLIA…SGSI), and 162–182 (FLKT…LVLL).

The protein belongs to the WTF family.

It is found in the spore membrane. Functionally, may act in meiotic drive. The polypeptide is Wtf element wtf15 (Schizosaccharomyces kambucha (Fission yeast)).